Reading from the N-terminus, the 145-residue chain is Large ribosomal subunit protein uL11 (145 aa).

Belongs to the universal ribosomal protein uL11 family. As to quaternary structure, part of the ribosomal stalk of the 50S ribosomal subunit. Interacts with L10 and the large rRNA to form the base of the stalk. L10 forms an elongated spine to which L12 dimers bind in a sequential fashion forming a multimeric L10(L12)X complex. One or more lysine residues are methylated.

Forms part of the ribosomal stalk which helps the ribosome interact with GTP-bound translation factors. This chain is Large ribosomal subunit protein uL11, found in Rubrobacter xylanophilus (strain DSM 9941 / JCM 11954 / NBRC 16129 / PRD-1).